The chain runs to 219 residues: Ras-related protein Rab-3D (219 aa).

Alanine 2 is modified (N-acetylalanine). A GDP-binding site is contributed by 29–37; that stretch reads GNSSVGKTS. The GTP site is built by serine 31, serine 32, valine 33, glycine 34, lysine 35, threonine 36, serine 37, proline 49, and serine 53. Residue threonine 36 participates in Mg(2+) binding. Positions 49–58 match the Switch 1 motif; that stretch reads PAFVSTVGID. Threonine 54 and aspartate 77 together coordinate Mg(2+). Glycine 80 lines the GTP pocket. The Switch 2 signature appears at 80–96; sequence GQERYRTITTAYYRGAM. The residue at position 86 (threonine 86) is a Phosphothreonine; by LRRK2. The GTP site is built by asparagine 135, lysine 136, aspartate 138, alanine 166, and lysine 167. Residues 135–138 and 165–167 contribute to the GDP site; these read NKCD and SAK. Serine 190 bears the Phosphoserine mark. The interval 190–219 is disordered; sequence SLEPSSSPGSNGKGPALGDTPPPQPSSCSC. Over residues 193–203 the composition is skewed to low complexity; the sequence is PSSSPGSNGKG. Pro residues predominate over residues 209–219; that stretch reads TPPPQPSSCSC. S-geranylgeranyl cysteine attachment occurs at residues cysteine 217 and cysteine 219. Residue cysteine 219 is modified to Cysteine methyl ester.

This sequence belongs to the small GTPase superfamily. Rab family. In terms of assembly, interacts with RIMS1, RIMS2, RPH3A, RPH3AL and RAB3IP. The GTP-bound form interacts with REP15. Interacts with CHM and CHML; phosphorylation at Thr-86 disrupts these interactions. Interacts with MADD (via uDENN domain); the GTP-bound form is preferred for interaction. It depends on Mg(2+) as a cofactor. Post-translationally, phosphorylation of Thr-86 in the switch II region by LRRK2 prevents the association of RAB regulatory proteins, including CHM and CHML. As to expression, predominantly expressed in the adipocyte tissue, but is also expressed in several other organs including skin, spleen, heart and lung.

It is found in the cell membrane. The enzyme catalyses GTP + H2O = GDP + phosphate + H(+). Its activity is regulated as follows. Regulated by guanine nucleotide exchange factors (GEFs) which promote the exchange of bound GDP for free GTP. Regulated by GTPase activating proteins (GAPs) which increase the GTP hydrolysis activity. Inhibited by GDP dissociation inhibitors (GDIs) which prevent Rab-GDP dissociation. Its function is as follows. The small GTPases Rab are key regulators of intracellular membrane trafficking, from the formation of transport vesicles to their fusion with membranes. Rabs cycle between an inactive GDP-bound form and an active GTP-bound form that is able to recruit to membranes different sets of downstream effectors directly responsible for vesicle formation, movement, tethering and fusion. RAB3D may be involved in the insulin-induced exocytosis of GLUT4-containing vesicles in adipocytes. The chain is Ras-related protein Rab-3D from Mus musculus (Mouse).